The primary structure comprises 527 residues: Sensory neuron membrane protein 1 (527 aa).

Over 1–10 (MQLQKPLKIG) the chain is Cytoplasmic. A helical transmembrane segment spans residues 11-31 (LGMMGAGLFGIIFGWVLFPVI). Residues 32–456 (LKSQLKKEMA…LKNQLFIPKR (425 aa)) lie on the Extracellular side of the membrane. N-linked (GlcNAc...) asparagine glycans are attached at residues N67 and N229. Intrachain disulfides connect C268–C333, C297–C352, and C335–C341. The N-linked (GlcNAc...) asparagine glycan is linked to N440. A helical transmembrane segment spans residues 457–477 (IVSVVKWLLAGVGFVGLVGSL). Topologically, residues 478-527 (VYQFKGKMINFALSPSSAQVTKVNPEINQQNQPKDISIIGESQNPPKVDM) are cytoplasmic.

Belongs to the CD36 family. In terms of tissue distribution, detected in both male and female antennal tissues. Expression is two to three fold higher in male compared to female antenna.

The protein resides in the cell membrane. Its function is as follows. Plays an olfactory role that is not restricted to pheromone sensitivity. This is Sensory neuron membrane protein 1 from Ostrinia furnacalis (Asian corn borer).